The sequence spans 81 residues: Cytoplasmic envelopment protein 3 (81 aa).

A lipid anchor (N-myristoyl glycine; by host) is attached at Gly2. Positions 22 to 23 (LV) match the Di-leucine-like internalization motif motif. The asp/Glu-rich (acidic) stretch occupies residues 41–47 (DFDENVT). Positions 47 to 81 (TEDADKSTQRRPRVIDVTPKRKPSGKSSHSKCAKC) are disordered. The span at 66 to 81 (KRKPSGKSSHSKCAKC) shows a compositional bias: basic residues.

Belongs to the herpesviridae cytoplasmic envelopment protein 3 family. Interacts with cytoplasmic envelopment protein 2; this interaction is essential for the proper localization of each protein to the assembly complex and thus for the production of infectious virus. In terms of processing, myristoylation and palmitoylation (probably on one or more of the nearby cysteines at the N-terminus) enable membrane-binding and Golgi apparatus-specific targeting and are essential for efficient packaging. Post-translationally, phosphorylated. Phosphorylation does not seem to be required for recycling to the host Golgi apparatus. Packaging is selective for underphosphorylated forms.

Its subcellular location is the virion tegument. The protein localises to the virion membrane. The protein resides in the host cell membrane. It localises to the host Golgi apparatus membrane. In terms of biological role, plays an important role in the cytoplasmic envelopment of tegument proteins and capsids during the assembly and egress processes. Also participates in viral entry at the fusion step probably by regulating the core fusion machinery. The sequence is that of Cytoplasmic envelopment protein 3 from Homo sapiens (Human).